Reading from the N-terminus, the 1083-residue chain is Voltage-gated inwardly rectifying potassium channel KCNH3 (1083 aa).

At 1–228 (MPAMRGLLAP…HCGALRATWD (228 aa)) the chain is on the cytoplasmic side. Positions 18 to 90 (IATRFDGTHS…QQIRKALDEH (73 aa)) constitute a PAS domain. The region spanning 93-145 (FKAELILYRKSGLPFWCLLDVIPIKNEKGEVALFLVSHKDISETKNRGGPDRW) is the PAC domain. Basic and acidic residues predominate over residues 137–150 (KNRGGPDRWKETGG). A disordered region spans residues 137-157 (KNRGGPDRWKETGGGRRRYGR). Residues 229-249 (GFILLATLYVAVTVPYSVCVS) traverse the membrane as a helical segment. Residues 250–259 (TAREPSAARG) lie on the Extracellular side of the membrane. Residues 260–280 (PPSVCDLAVEVLFILDIVLNF) form a helical membrane-spanning segment. The Cytoplasmic portion of the chain corresponds to 281–302 (RTTFVSKSGQVVFAPKSICLHY). The chain crosses the membrane as a helical span at residues 303 to 323 (VTTWFLLDVIAALPFDLLHAF). The Extracellular portion of the chain corresponds to 324–331 (KVNVYFGA). The chain crosses the membrane as a helical; Voltage-sensor span at residues 332–352 (HLLKTVRLLRLLRLLPRLDRY). At 353-361 (SQYSAVVLT) the chain is on the cytoplasmic side. The helical transmembrane segment at 362–382 (LLMAVFALLAHWVACVWFYIG) threads the bilayer. At 383–453 (QREIESSESE…GGPSLRSAYI (71 aa)) the chain is on the extracellular side. 3 N-linked (GlcNAc...) asparagine glycosylation sites follow: asparagine 421, asparagine 428, and asparagine 436. The segment at residues 454-474 (TSLYFALSSLTSVGFGNVSAN) is an intramembrane region (pore-forming). Residues 465-470 (SVGFGN) carry the Selectivity filter motif. The Extracellular portion of the chain corresponds to 475 to 479 (TDTEK). The helical transmembrane segment at 480–500 (IFSICTMLIGALMHAVVFGNV) threads the bilayer. The Cytoplasmic segment spans residues 501–1083 (TAIIQRMYAR…QWTQEEGTGV (583 aa)). 582–697 (LFEAASRGCL…FAPRFSRGLR (116 aa)) contributes to the a nucleoside 3',5'-cyclic phosphate binding site. 3 disordered regions span residues 729 to 810 (EEKE…LRLP), 832 to 873 (CGSD…SEAR), and 972 to 1055 (MAPW…ALPW). Over residues 773–785 (TAPRPRLGGRGRP) the composition is skewed to basic residues. Residues 844–861 (GQSGPECSSSPSPGPESG) are compositionally biased toward low complexity.

The protein belongs to the potassium channel family. H (Eag) (TC 1.A.1.20) subfamily. Kv12.2/KCNH3 sub-subfamily. As to quaternary structure, the potassium channel is probably composed of a homo- or heterotetrameric complex of pore-forming alpha subunits that can associate with modulating beta subunits. Interacts with KCNE1 and KCNE3; these interactions regulate KCNH3 trafficking to the plasma membrane and its subsequent voltage-gated potassium channel activity. N-glycosylated. N-glycosylation mediates traffick to the cell membrane but is not necessary for voltage-gated potassium channel activity. As to expression, detected only in brain, in particular in the telencephalon. Detected in the cerebral cortex, occipital pole, frontal and temporal lobe, putamen, amygdala, hippocampus and caudate nucleus.

The protein resides in the cell membrane. The catalysed reaction is K(+)(in) = K(+)(out). Its function is as follows. Pore-forming (alpha) subunit of a voltage-gated inwardly rectifying potassium channel. Charactherized by a fast rate of activation during depolarization followed by a rapid inactivation at much more depolarized value causing inward rectification due to a C-type inactivation mechanism. Exhibits a rapid recovery from inactivation. In Homo sapiens (Human), this protein is Voltage-gated inwardly rectifying potassium channel KCNH3.